Here is a 488-residue protein sequence, read N- to C-terminus: 3-octaprenyl-4-hydroxybenzoate carboxy-lyase (488 aa).

Residue asparagine 172 participates in Mn(2+) binding. Residues 175–177, 189–191, and 194–195 contribute to the prenylated FMN site; these read IYR, RWL, and RG. Residue glutamate 238 coordinates Mn(2+). The active-site Proton donor is aspartate 287.

The protein belongs to the UbiD family. In terms of assembly, homohexamer. Requires prenylated FMN as cofactor. Mn(2+) serves as cofactor.

The protein localises to the cell membrane. It carries out the reaction a 4-hydroxy-3-(all-trans-polyprenyl)benzoate + H(+) = a 2-(all-trans-polyprenyl)phenol + CO2. Its pathway is cofactor biosynthesis; ubiquinone biosynthesis. Functionally, catalyzes the decarboxylation of 3-octaprenyl-4-hydroxy benzoate to 2-octaprenylphenol, an intermediate step in ubiquinone biosynthesis. In Shewanella oneidensis (strain ATCC 700550 / JCM 31522 / CIP 106686 / LMG 19005 / NCIMB 14063 / MR-1), this protein is 3-octaprenyl-4-hydroxybenzoate carboxy-lyase.